Here is a 515-residue protein sequence, read N- to C-terminus: Maturase K (515 aa).

The protein belongs to the intron maturase 2 family. MatK subfamily.

It is found in the plastid. The protein localises to the chloroplast. Usually encoded in the trnK tRNA gene intron. Probably assists in splicing its own and other chloroplast group II introns. This Pinus densiflora (Japanese red pine) protein is Maturase K.